A 391-amino-acid polypeptide reads, in one-letter code: Chorismate synthase (391 aa).

Arginine 48 provides a ligand contact to NADP(+). Residues 126 to 128 (RAS), glycine 286, 301 to 305 (KPTSS), and arginine 328 each bind FMN.

This sequence belongs to the chorismate synthase family. The cofactor is FMNH2.

The catalysed reaction is 5-O-(1-carboxyvinyl)-3-phosphoshikimate = chorismate + phosphate. It functions in the pathway metabolic intermediate biosynthesis; chorismate biosynthesis; chorismate from D-erythrose 4-phosphate and phosphoenolpyruvate: step 7/7. Catalyzes the anti-1,4-elimination of the C-3 phosphate and the C-6 proR hydrogen from 5-enolpyruvylshikimate-3-phosphate (EPSP) to yield chorismate, which is the branch point compound that serves as the starting substrate for the three terminal pathways of aromatic amino acid biosynthesis. This reaction introduces a second double bond into the aromatic ring system. This Saccharolobus islandicus (strain L.S.2.15 / Lassen #1) (Sulfolobus islandicus) protein is Chorismate synthase.